Consider the following 405-residue polypeptide: CCA-adding enzyme (405 aa).

The ATP site is built by Gly8 and Arg11. CTP contacts are provided by Gly8 and Arg11. 2 residues coordinate Mg(2+): Glu21 and Asp23. Positions 91, 137, and 140 each coordinate ATP. Residues Arg91, Arg137, and Arg140 each coordinate CTP. The HD domain maps to Pro220–Trp326.

Belongs to the tRNA nucleotidyltransferase/poly(A) polymerase family. Bacterial CCA-adding enzyme type 2 subfamily. Mg(2+) serves as cofactor.

The catalysed reaction is a tRNA precursor + 2 CTP + ATP = a tRNA with a 3' CCA end + 3 diphosphate. It carries out the reaction a tRNA with a 3' CCA end + 2 CTP + ATP = a tRNA with a 3' CCACCA end + 3 diphosphate. Functionally, catalyzes the addition and repair of the essential 3'-terminal CCA sequence in tRNAs without using a nucleic acid template. Adds these three nucleotides in the order of C, C, and A to the tRNA nucleotide-73, using CTP and ATP as substrates and producing inorganic pyrophosphate. tRNA 3'-terminal CCA addition is required both for tRNA processing and repair. Also involved in tRNA surveillance by mediating tandem CCA addition to generate a CCACCA at the 3' terminus of unstable tRNAs. While stable tRNAs receive only 3'-terminal CCA, unstable tRNAs are marked with CCACCA and rapidly degraded. The polypeptide is CCA-adding enzyme (Hamiltonella defensa subsp. Acyrthosiphon pisum (strain 5AT)).